The primary structure comprises 242 residues: Ribonuclease 3 2 (242 aa).

The 126-residue stretch at 12–137 (LESLVRKLGL…VLGALYLSTS (126 aa)) folds into the RNase III domain. Glutamate 51 provides a ligand contact to Mg(2+). Residue aspartate 55 is part of the active site. The Mg(2+) site is built by aspartate 123 and glutamate 126. Glutamate 126 is a catalytic residue. Residues 165–235 (NYKAALQEWT…AKVAFLAITP (71 aa)) enclose the DRBM domain.

This sequence belongs to the ribonuclease III family. Homodimer. It depends on Mg(2+) as a cofactor.

The protein resides in the cytoplasm. The catalysed reaction is Endonucleolytic cleavage to 5'-phosphomonoester.. In terms of biological role, digests double-stranded RNA. Involved in the processing of primary rRNA transcript to yield the immediate precursors to the large and small rRNAs (23S and 16S). Processes some mRNAs, and tRNAs when they are encoded in the rRNA operon. Processes pre-crRNA and tracrRNA of type II CRISPR loci if present in the organism. The chain is Ribonuclease 3 2 (rnc2) from Nostoc sp. (strain PCC 7120 / SAG 25.82 / UTEX 2576).